Here is a 247-residue protein sequence, read N- to C-terminus: Transmembrane protein 33 (247 aa).

Ala2 bears the N-acetylalanine mark. The Lumenal segment spans residues 2-31 (ADTTPNGPQGAGAVQFMMTNKLDTAMWLSR). The chain crosses the membrane as a helical span at residues 32-52 (LFTVYCSALFVLPLLGLHEAA). Topologically, residues 53 to 100 (SFYQRALLANALTSALRLHQRLPHFQLSRAFLAQALLEDSCHYLLYSL) are cytoplasmic. A helical membrane pass occupies residues 101–121 (IFVNSYPVTMSIFPVLLFSLL). Residues 122-155 (HAATYTKKVLDARGSNSLPLLRSVLDKLSANQQN) are Lumenal-facing. A helical transmembrane segment spans residues 156-176 (ILKFIACNEIFLMPATVFMLF). The Cytoplasmic portion of the chain corresponds to 177–247 (SGQGSLLQPF…FISRLAPTVP (71 aa)).

It belongs to the PER33/POM33 family. In terms of assembly, interacts with EIF2AK3. Interacts with ARL6IP1, isoform RTN1-A of RTN1, isoform RTN2-B of RTN2, isoform 3 of RTN3 and isoform 3 of RTN4. Interacts with RNF5. Interacts with RNF26. Interacts with PKD2. In terms of tissue distribution, prostate cancer and several cancer cell lines (at protein level). Widely expressed. Expressed at higher levels in endocrine-resistant breast cancer cells as compared to endocrine-sensitive breast cancer cells. Expressed at higher levels in early recurrence breast cancer tissues as compared to non-recurrent breast tumors.

The protein localises to the endoplasmic reticulum membrane. Its subcellular location is the melanosome. It is found in the nucleus envelope. Functionally, acts as a regulator of the tubular endoplasmic reticulum (ER) network by modulating intracellular calcium homeostasis. Mechanistically, stimulates PKD2 calcium-dependent activity. Suppresses the RTN3/4-induced formation of the ER tubules. Positively regulates PERK-mediated and IRE1-mediated unfolded protein response signaling. Plays an essential role in VEGF-mediated release of Ca(2+) from ER stores during angiogenesis. Also plays a role in the modulation of innate immune signaling through the cGAS-STING pathway by interacting with RNF26. Participates in lipid metabolism by acting as a downstream effector of the pyruvate kinase/PKM. Forms a complex with RNF5 to facilitate polyubiquitination and subsequent degradation of SCAP on the ER membrane. The chain is Transmembrane protein 33 (TMEM33) from Homo sapiens (Human).